Here is a 207-residue protein sequence, read N- to C-terminus: Mediator of RNA polymerase II transcription subunit 21 (207 aa).

Residues 36–120 (IPPPDVPDAA…APDSPRTFAS (85 aa)) form a disordered region. The span at 91–108 (GEGAQTPGPAAGAGADPN) shows a compositional bias: low complexity. Residues 146–194 (IDSSEAEQEKRIRELEGELRQVEEERELKMRELKRLRRTLENVLTAVET) are a coiled coil.

The protein belongs to the Mediator complex subunit 21 family. As to quaternary structure, component of the Mediator complex.

The protein localises to the nucleus. Functionally, component of the Mediator complex, a coactivator involved in the regulated transcription of nearly all RNA polymerase II-dependent genes. Mediator functions as a bridge to convey information from gene-specific regulatory proteins to the basal RNA polymerase II transcription machinery. Mediator is recruited to promoters by direct interactions with regulatory proteins and serves as a scaffold for the assembly of a functional preinitiation complex with RNA polymerase II and the general transcription factors. This is Mediator of RNA polymerase II transcription subunit 21 (srb7) from Aspergillus fumigatus (strain ATCC MYA-4609 / CBS 101355 / FGSC A1100 / Af293) (Neosartorya fumigata).